A 297-amino-acid polypeptide reads, in one-letter code: UDP-N-acetylenolpyruvoylglucosamine reductase (297 aa).

One can recognise an FAD-binding PCMH-type domain in the interval 26–191; that stretch reads KSGGTADWLF…VAARFRGHPG (166 aa). R171 is an active-site residue. The active-site Proton donor is S220. E290 is an active-site residue.

The protein belongs to the MurB family. Requires FAD as cofactor.

It localises to the cytoplasm. It carries out the reaction UDP-N-acetyl-alpha-D-muramate + NADP(+) = UDP-N-acetyl-3-O-(1-carboxyvinyl)-alpha-D-glucosamine + NADPH + H(+). Its pathway is cell wall biogenesis; peptidoglycan biosynthesis. In terms of biological role, cell wall formation. This Novosphingobium aromaticivorans (strain ATCC 700278 / DSM 12444 / CCUG 56034 / CIP 105152 / NBRC 16084 / F199) protein is UDP-N-acetylenolpyruvoylglucosamine reductase.